Here is a 1091-residue protein sequence, read N- to C-terminus: Constitutive coactivator of PPAR-gamma-like protein 2 (1091 aa).

Over residues 35 to 53 the composition is skewed to low complexity; that stretch reads QQQHLHRQLPPAALAPGAP. Disordered stretches follow at residues 35-105, 503-575, 966-1010, and 1037-1077; these read QQQH…HPPP, NCLT…SEPH, SRSS…QGSS, and VEEK…KNHV. Arg-57 is modified (omega-N-methylarginine). Basic residues predominate over residues 82–95; that stretch reads SRHHHPAHHFHHHG. The span at 532–544 shows a compositional bias: polar residues; that stretch reads GSEQITEAVQQQP. Over residues 966-976 the composition is skewed to low complexity; the sequence is SRSSRSRGSFG. Arg-972 carries the omega-N-methylarginine modification. Basic and acidic residues predominate over residues 1062–1077; sequence SDDHCLPVKNGEKNHV.

Belongs to the constitutive coactivator of PPAR-gamma family.

The polypeptide is Constitutive coactivator of PPAR-gamma-like protein 2 (Fam120c) (Mus musculus (Mouse)).